Reading from the N-terminus, the 332-residue chain is Ribose-phosphate pyrophosphokinase (332 aa).

55–57 provides a ligand contact to ATP; sequence DGE. Mg(2+) is bound by residues H148 and D187. K211 is an active-site residue. D-ribose 5-phosphate-binding positions include R213, D237, and 241–245; that span reads DTGGT.

It belongs to the ribose-phosphate pyrophosphokinase family. Class I subfamily. Homohexamer. It depends on Mg(2+) as a cofactor.

It localises to the cytoplasm. The catalysed reaction is D-ribose 5-phosphate + ATP = 5-phospho-alpha-D-ribose 1-diphosphate + AMP + H(+). It participates in metabolic intermediate biosynthesis; 5-phospho-alpha-D-ribose 1-diphosphate biosynthesis; 5-phospho-alpha-D-ribose 1-diphosphate from D-ribose 5-phosphate (route I): step 1/1. Its function is as follows. Involved in the biosynthesis of the central metabolite phospho-alpha-D-ribosyl-1-pyrophosphate (PRPP) via the transfer of pyrophosphoryl group from ATP to 1-hydroxyl of ribose-5-phosphate (Rib-5-P). The sequence is that of Ribose-phosphate pyrophosphokinase from Prochlorococcus marinus (strain MIT 9313).